A 417-amino-acid polypeptide reads, in one-letter code: GTP-binding protein YPT11 (417 aa).

The segment at 1-34 is disordered; it reads MSQRKRYSLNVVTSPSIPSPTPSAPIRTNESNWE. GTP is bound by residues 97 to 104, 228 to 232, and 292 to 295; these read GDANVGKT, DTAGQ, and NKID. Residues C415 and C416 are each lipidated (S-geranylgeranyl cysteine).

This sequence belongs to the small GTPase superfamily. Rab family. In terms of assembly, interacts with MYO2 (via C-terminal tail domain). Interacts with YIF1, YIP3, YIP4 and YIP5.

The protein resides in the endoplasmic reticulum membrane. Its subcellular location is the bud tip. It localises to the bud neck. Functionally, involved in the positive control of both endoplasmic reticulum (ER) and mitochondrion inheritance during cell divison. Required for the MYO2-dependent retention of newly inherited mitochondria at the bud tip in developing daughter cells. This is GTP-binding protein YPT11 (YPT11) from Saccharomyces cerevisiae (strain YJM789) (Baker's yeast).